A 247-amino-acid polypeptide reads, in one-letter code: MQQGNTATLILLRHGESDWNARNLFTGWVDVGLTDKGRAEAVRSGELLAEHNLLPDVLYTSLLRRAITTAHLALDTADWLWIPVRRSWRLNERHYGALQGLDKAVTKARYGEERFMAWRRSYDTPPPPIEKGSEFSQDADPRYTDIGGGPLTECLADVVTRFLPYFTDVIVPDLRTGRTVLIVAHGNSLRALVKHLDEMSDDEVVGLNVPTGIPLRYDLDADLRPVVPGGTYLDPEAAAAVISQARP.

Residues 13–20 (RHGESDWN), 26–27 (TG), arginine 65, 92–95 (ERHY), lysine 103, 119–120 (RR), and 186–187 (GN) contribute to the substrate site. Histidine 14 serves as the catalytic Tele-phosphohistidine intermediate. Glutamate 92 serves as the catalytic Proton donor/acceptor.

It belongs to the phosphoglycerate mutase family. BPG-dependent PGAM subfamily. In terms of assembly, homotetramer, dimer of dimers.

It carries out the reaction (2R)-2-phosphoglycerate = (2R)-3-phosphoglycerate. The protein operates within carbohydrate degradation; glycolysis; pyruvate from D-glyceraldehyde 3-phosphate: step 3/5. In terms of biological role, catalyzes the interconversion of 2-phosphoglycerate and 3-phosphoglycerate. The protein is 2,3-bisphosphoglycerate-dependent phosphoglycerate mutase of Mycobacterium leprae (strain Br4923).